A 1086-amino-acid polypeptide reads, in one-letter code: DNA polymerase (1086 aa).

The tract at residues 638–657 is disordered; sequence STTRKPVDDVEEHSECNGFT.

This sequence belongs to the DNA polymerase type-B family.

It catalyses the reaction DNA(n) + a 2'-deoxyribonucleoside 5'-triphosphate = DNA(n+1) + diphosphate. Functionally, replicates the viral genome. Host DNA polymerases cannot substitute for the viral enzyme in this process. The protein is DNA polymerase of Noctuidae (owlet moths).